The chain runs to 420 residues: Glucose-1-phosphate adenylyltransferase (420 aa).

Alpha-D-glucose 1-phosphate-binding positions include Tyr107, Gly173, 188 to 189 (EK), and Ser206.

The protein belongs to the bacterial/plant glucose-1-phosphate adenylyltransferase family. As to quaternary structure, homotetramer.

It catalyses the reaction alpha-D-glucose 1-phosphate + ATP + H(+) = ADP-alpha-D-glucose + diphosphate. It participates in glycan biosynthesis; glycogen biosynthesis. Its function is as follows. Involved in the biosynthesis of ADP-glucose, a building block required for the elongation reactions to produce glycogen. Catalyzes the reaction between ATP and alpha-D-glucose 1-phosphate (G1P) to produce pyrophosphate and ADP-Glc. This is Glucose-1-phosphate adenylyltransferase from Shewanella frigidimarina (strain NCIMB 400).